Reading from the N-terminus, the 87-residue chain is Small ribosomal subunit protein bS18 (87 aa).

This sequence belongs to the bacterial ribosomal protein bS18 family. In terms of assembly, part of the 30S ribosomal subunit. Forms a tight heterodimer with protein bS6.

Binds as a heterodimer with protein bS6 to the central domain of the 16S rRNA, where it helps stabilize the platform of the 30S subunit. This Mesomycoplasma hyopneumoniae (strain 232) (Mycoplasma hyopneumoniae) protein is Small ribosomal subunit protein bS18.